Consider the following 72-residue polypeptide: Translation initiation factor IF-1 (72 aa).

The S1-like domain maps to 1-72; the sequence is MSKEDVIEVE…TRGRITWRKK (72 aa).

Belongs to the IF-1 family. Component of the 30S ribosomal translation pre-initiation complex which assembles on the 30S ribosome in the order IF-2 and IF-3, IF-1 and N-formylmethionyl-tRNA(fMet); mRNA recruitment can occur at any time during PIC assembly.

Its subcellular location is the cytoplasm. One of the essential components for the initiation of protein synthesis. Stabilizes the binding of IF-2 and IF-3 on the 30S subunit to which N-formylmethionyl-tRNA(fMet) subsequently binds. Helps modulate mRNA selection, yielding the 30S pre-initiation complex (PIC). Upon addition of the 50S ribosomal subunit IF-1, IF-2 and IF-3 are released leaving the mature 70S translation initiation complex. This is Translation initiation factor IF-1 from Alkaliphilus metalliredigens (strain QYMF).